Consider the following 129-residue polypeptide: Small ribosomal subunit protein uS11 (129 aa).

Belongs to the universal ribosomal protein uS11 family. Part of the 30S ribosomal subunit. Interacts with proteins S7 and S18. Binds to IF-3.

Located on the platform of the 30S subunit, it bridges several disparate RNA helices of the 16S rRNA. Forms part of the Shine-Dalgarno cleft in the 70S ribosome. The protein is Small ribosomal subunit protein uS11 of Listeria innocua serovar 6a (strain ATCC BAA-680 / CLIP 11262).